Consider the following 426-residue polypeptide: Phosphomethylpyrimidine synthase (426 aa).

Substrate-binding positions include Asn-65, Met-94, Tyr-123, His-162, 184-186 (SRG), 225-228 (DGMR), and Glu-264. A Zn(2+)-binding site is contributed by His-268. Tyr-291 contacts substrate. Residue His-332 participates in Zn(2+) binding. [4Fe-4S] cluster-binding residues include Cys-408, Cys-411, and Cys-415.

The protein belongs to the ThiC family. The cofactor is [4Fe-4S] cluster.

It catalyses the reaction 5-amino-1-(5-phospho-beta-D-ribosyl)imidazole + S-adenosyl-L-methionine = 4-amino-2-methyl-5-(phosphooxymethyl)pyrimidine + CO + 5'-deoxyadenosine + formate + L-methionine + 3 H(+). It functions in the pathway cofactor biosynthesis; thiamine diphosphate biosynthesis. In terms of biological role, catalyzes the synthesis of the hydroxymethylpyrimidine phosphate (HMP-P) moiety of thiamine from aminoimidazole ribotide (AIR) in a radical S-adenosyl-L-methionine (SAM)-dependent reaction. The sequence is that of Phosphomethylpyrimidine synthase from Methanococcus maripaludis (strain C7 / ATCC BAA-1331).